We begin with the raw amino-acid sequence, 131 residues long: DNA-directed RNA polymerase subunit omega (131 aa).

The protein belongs to the RNA polymerase subunit omega family. In terms of assembly, the RNAP catalytic core consists of 2 alpha, 1 beta, 1 beta' and 1 omega subunit. When a sigma factor is associated with the core the holoenzyme is formed, which can initiate transcription.

The enzyme catalyses RNA(n) + a ribonucleoside 5'-triphosphate = RNA(n+1) + diphosphate. Promotes RNA polymerase assembly. Latches the N- and C-terminal regions of the beta' subunit thereby facilitating its interaction with the beta and alpha subunits. The polypeptide is DNA-directed RNA polymerase subunit omega (Chelativorans sp. (strain BNC1)).